The following is a 347-amino-acid chain: UDP-3-O-acylglucosamine N-acyltransferase (347 aa).

Residue histidine 241 is the Proton acceptor of the active site.

Belongs to the transferase hexapeptide repeat family. LpxD subfamily. Homotrimer.

It carries out the reaction a UDP-3-O-[(3R)-3-hydroxyacyl]-alpha-D-glucosamine + a (3R)-hydroxyacyl-[ACP] = a UDP-2-N,3-O-bis[(3R)-3-hydroxyacyl]-alpha-D-glucosamine + holo-[ACP] + H(+). The protein operates within bacterial outer membrane biogenesis; LPS lipid A biosynthesis. In terms of biological role, catalyzes the N-acylation of UDP-3-O-acylglucosamine using 3-hydroxyacyl-ACP as the acyl donor. Is involved in the biosynthesis of lipid A, a phosphorylated glycolipid that anchors the lipopolysaccharide to the outer membrane of the cell. The protein is UDP-3-O-acylglucosamine N-acyltransferase of Nitrosococcus oceani (strain ATCC 19707 / BCRC 17464 / JCM 30415 / NCIMB 11848 / C-107).